The following is a 362-amino-acid chain: Major capsid protein VP1 (362 aa).

Residues 5–19 (KRKGECPGAAPKKPK) carry the Bipartite nuclear localization signal motif. Residue Thr-338 is modified to Phosphothreonine; by host.

This sequence belongs to the polyomaviruses coat protein VP1 family. Homomultimer; disulfide-linked. The virus capsid is composed of 72 icosahedral units, each one composed of five disulfide-linked copies of VP1. Interacts with minor capsid proteins VP2 and VP3.

The protein localises to the virion. It is found in the host nucleus. Its function is as follows. Forms an icosahedral capsid with a T=7 symmetry and a 40 nm diameter. The capsid is composed of 72 pentamers linked to each other by disulfide bonds and associated with VP2 or VP3 proteins. Interacts with sialic acids on the cell surface to provide virion attachment to target cell. Once attached, the virion is internalized by endocytosis and traffics to the endoplasmic reticulum. Inside the endoplasmic reticulum, the protein folding machinery isomerizes VP1 interpentamer disulfide bonds, thereby triggering initial uncoating. Next, the virion uses the endoplasmic reticulum-associated degradation machinery to probably translocate in the cytosol before reaching the nucleus. Nuclear entry of the viral DNA involves the selective exposure and importin recognition of VP2/Vp3 nuclear localization signal. In late phase of infection, neo-synthesized VP1 encapsulates replicated genomic DNA in the nucleus, and participates in rearranging nucleosomes around the viral DNA. The chain is Major capsid protein VP1 from Simian virus 12 (strain wt100) (SV-12).